Here is a 334-residue protein sequence, read N- to C-terminus: UDP-N-acetylglucosamine 4,6-dehydratase (inverting) (334 aa).

NADP(+)-binding positions include 13–16 (TGSF), 37–42 (SRDELK), 61–62 (DV), Ala-81, Lys-85, and 123–124 (LS). Lys-85 contributes to the substrate binding site. The active site involves Lys-127. NADP(+)-binding residues include Tyr-135 and Lys-139. Asn-167 provides a ligand contact to substrate. Position 168 to 172 (168 to 172 (VVGSR)) interacts with NADP(+). Residues Val-175, Thr-193, Arg-252, and Glu-255 each coordinate substrate.

This sequence belongs to the polysaccharide synthase family. As to quaternary structure, homohexamer. NADP(+) serves as cofactor.

It carries out the reaction UDP-N-acetyl-alpha-D-glucosamine = UDP-2-acetamido-2,6-dideoxy-beta-L-arabino-hex-4-ulose + H2O. Its function is as follows. Catalyzes the first step in the biosynthesis of pseudaminic acid, a sialic-acid-like sugar that is used to modify flagellin. Has both C6 dehydratase and C5 epimerase activities that result in the production of both UDP-2-acetamido-2,6-dideoxy-beta-L-arabino-4-hexulose and UDP-2-acetamido-2,6-dideoxy-alpha-D-xylo-4-hexulose. The polypeptide is UDP-N-acetylglucosamine 4,6-dehydratase (inverting) (pseB) (Campylobacter jejuni subsp. jejuni serotype O:23/36 (strain 81-176)).